Consider the following 208-residue polypeptide: UPF0637 protein BcerKBAB4_3786 (208 aa).

It belongs to the UPF0637 family.

In Bacillus mycoides (strain KBAB4) (Bacillus weihenstephanensis), this protein is UPF0637 protein BcerKBAB4_3786.